Reading from the N-terminus, the 665-residue chain is Putative phospholipid:diacylglycerol acyltransferase 2 (665 aa).

The chain crosses the membrane as a helical span at residues 48 to 68 (LIGYLCTAWWLLLFLYHSVPV). S237 acts as the Acyl-ester intermediate in catalysis. Active-site charge relay system residues include D567 and H620.

It belongs to the AB hydrolase superfamily. Lipase family.

The protein localises to the membrane. The enzyme catalyses a glycerophospholipid + a 1,2-diacyl-sn-glycerol = a monoacylglycerophospholipid + a triacyl-sn-glycerol. The chain is Putative phospholipid:diacylglycerol acyltransferase 2 (PDAT2) from Arabidopsis thaliana (Mouse-ear cress).